The following is a 469-amino-acid chain: Probable monogalactosyldiacylglycerol synthase 2, chloroplastic (469 aa).

The transit peptide at 1–42 (MVISVATPRRSIRDAVLGGVLGAGGRQLYQPLRCAFYDGAAG) directs the protein to the chloroplast.

This sequence belongs to the glycosyltransferase 28 family.

The protein resides in the plastid. The protein localises to the chloroplast membrane. It carries out the reaction a 1,2-diacyl-sn-glycerol + UDP-alpha-D-galactose = a 1,2-diacyl-3-O-(beta-D-galactosyl)-sn-glycerol + UDP + H(+). Involved in the synthesis of the major structural component of photosynthetic membranes. The chain is Probable monogalactosyldiacylglycerol synthase 2, chloroplastic (MGD2) from Oryza sativa subsp. japonica (Rice).